The chain runs to 368 residues: Molybdenum import ATP-binding protein ModC (368 aa).

The 231-residue stretch at 1–231 (MKGLQVAFKQ…QAMRPWQSFS (231 aa)) folds into the ABC transporter domain. 33 to 40 (GRSGAGKT) is a binding site for ATP. A Mop domain is found at 292–363 (KTSIRNIIEA…IKGVSVTQRD (72 aa)).

This sequence belongs to the ABC transporter superfamily. Molybdate importer (TC 3.A.1.8) family. In terms of assembly, the complex is composed of two ATP-binding proteins (ModC), two transmembrane proteins (ModB) and a solute-binding protein (ModA).

The protein resides in the cell inner membrane. It carries out the reaction molybdate(out) + ATP + H2O = molybdate(in) + ADP + phosphate + H(+). In terms of biological role, part of the ABC transporter complex ModABC involved in molybdenum import. Responsible for energy coupling to the transport system. The protein is Molybdenum import ATP-binding protein ModC of Vibrio vulnificus (strain YJ016).